Reading from the N-terminus, the 373-residue chain is UDP-N-acetylglucosamine--N-acetylmuramyl-(pentapeptide) pyrophosphoryl-undecaprenol N-acetylglucosamine transferase (373 aa).

Residues Thr-16–Gly-18, Asn-128, Arg-164, Ser-192, Ile-250, and Gln-295 contribute to the UDP-N-acetyl-alpha-D-glucosamine site.

Belongs to the glycosyltransferase 28 family. MurG subfamily.

The protein resides in the cell inner membrane. The catalysed reaction is di-trans,octa-cis-undecaprenyl diphospho-N-acetyl-alpha-D-muramoyl-L-alanyl-D-glutamyl-meso-2,6-diaminopimeloyl-D-alanyl-D-alanine + UDP-N-acetyl-alpha-D-glucosamine = di-trans,octa-cis-undecaprenyl diphospho-[N-acetyl-alpha-D-glucosaminyl-(1-&gt;4)]-N-acetyl-alpha-D-muramoyl-L-alanyl-D-glutamyl-meso-2,6-diaminopimeloyl-D-alanyl-D-alanine + UDP + H(+). It participates in cell wall biogenesis; peptidoglycan biosynthesis. Cell wall formation. Catalyzes the transfer of a GlcNAc subunit on undecaprenyl-pyrophosphoryl-MurNAc-pentapeptide (lipid intermediate I) to form undecaprenyl-pyrophosphoryl-MurNAc-(pentapeptide)GlcNAc (lipid intermediate II). The chain is UDP-N-acetylglucosamine--N-acetylmuramyl-(pentapeptide) pyrophosphoryl-undecaprenol N-acetylglucosamine transferase from Paraburkholderia phymatum (strain DSM 17167 / CIP 108236 / LMG 21445 / STM815) (Burkholderia phymatum).